The sequence spans 137 residues: NADPH-dependent 7-cyano-7-deazaguanine reductase (137 aa).

Residue Cys50 is the Thioimide intermediate of the active site. Catalysis depends on Asp57, which acts as the Proton donor. Substrate contacts are provided by residues 72–74 and 91–92; these read VEL and HE.

This sequence belongs to the GTP cyclohydrolase I family. QueF type 1 subfamily.

The protein resides in the cytoplasm. The enzyme catalyses 7-aminomethyl-7-carbaguanine + 2 NADP(+) = 7-cyano-7-deazaguanine + 2 NADPH + 3 H(+). Its pathway is tRNA modification; tRNA-queuosine biosynthesis. Its function is as follows. Catalyzes the NADPH-dependent reduction of 7-cyano-7-deazaguanine (preQ0) to 7-aminomethyl-7-deazaguanine (preQ1). The sequence is that of NADPH-dependent 7-cyano-7-deazaguanine reductase from Synechocystis sp. (strain ATCC 27184 / PCC 6803 / Kazusa).